The following is a 253-amino-acid chain: Tryptophan synthase alpha chain (253 aa).

Residues E45 and D56 each act as proton acceptor in the active site.

The protein belongs to the TrpA family. As to quaternary structure, tetramer of two alpha and two beta chains.

It catalyses the reaction (1S,2R)-1-C-(indol-3-yl)glycerol 3-phosphate + L-serine = D-glyceraldehyde 3-phosphate + L-tryptophan + H2O. It functions in the pathway amino-acid biosynthesis; L-tryptophan biosynthesis; L-tryptophan from chorismate: step 5/5. Its function is as follows. The alpha subunit is responsible for the aldol cleavage of indoleglycerol phosphate to indole and glyceraldehyde 3-phosphate. This chain is Tryptophan synthase alpha chain, found in Flavobacterium johnsoniae (strain ATCC 17061 / DSM 2064 / JCM 8514 / BCRC 14874 / CCUG 350202 / NBRC 14942 / NCIMB 11054 / UW101) (Cytophaga johnsonae).